A 721-amino-acid polypeptide reads, in one-letter code: MAEPITKEQPPPPAPDPNSTYPPPSDFDSISIPPLDDHFSDQTPIGELMSDLGFPDGEFELTFDGMDDLYFPAENESFLIPINTSNQEQFGDFTPESESSGISGDCIVPKDADKTITTSGCINRESPRDSDDRCSGADHNLDLPTPLSSQGSGNCGSDVSEATNESSPKSRNVAVDQKVKVEEAATTTTSITKRKKEIDEDLTDESRNSKYRRSGEDADASAVTGEEDEKKRARLMRNRESAQLSRQRKKHYVEELEEKVRNMHSTITDLNGKISYFMAENATLRQQLGGNGMCPPHLPPPPMGMYPPMAPMPYPWMPCPPYMVKQQGSQVPLIPIPRLKPQNTLGTSKAKKSESKKSEAKTKKVASISFLGLLFCLFLFGALAPIVNVNYGGISGAFYGNYRSNYITDQIYSQHRDRVLDTSRSGAGTGVSNSNGMHRGRDSDRGARKNISATESSVTPGNGSEPLVASLFVPRNDKLVKIDGNLIINSILASEKAVASRKASESKERKADLMISKDYTPALPLPDVGRTEELAKHLYRSKAEKQKALSSGSADTLKDQVKTKAANGEMQQWFREGVAGPMFSSGMCTEVFQFDVSSTSGAIIPAATNVSAEHGKNTTDTHKQQNRRILRGLPIPLPGSDFNLTKEHQRNSSSKEIKPASSMVVSVLVDPREGGDGDIDGMIGGPKSLSRVFVVVLLDSAKYVTYSCVLPRSGAPHLVTT.

Disordered stretches follow at residues 1 to 51 and 87 to 232; these read MAEP…LMSD and QEQF…EKKR. At 1 to 366 the chain is on the cytoplasmic side; that stretch reads MAEPITKEQP…KSEAKTKKVA (366 aa). Over residues 9 to 25 the composition is skewed to pro residues; sequence QPPPPAPDPNSTYPPPS. Residues 125-141 show a composition bias toward basic and acidic residues; it reads ESPRDSDDRCSGADHNL. Residues 146 to 170 show a composition bias toward polar residues; that stretch reads PLSSQGSGNCGSDVSEATNESSPKS. A compositionally biased stretch (basic and acidic residues) spans 204–216; it reads DESRNSKYRRSGE. A bZIP domain is found at 228 to 288; that stretch reads DEKKRARLMR…AENATLRQQL (61 aa). The segment at 230–261 is basic motif; the sequence is KKRARLMRNRESAQLSRQRKKHYVEELEEKVR. The tract at residues 267-274 is leucine-zipper; sequence ITDLNGKI. Residues 337-359 are disordered; the sequence is PRLKPQNTLGTSKAKKSESKKSE. A helical transmembrane segment spans residues 367 to 387; it reads SISFLGLLFCLFLFGALAPIV. Residues 388-721 lie on the Lumenal side of the membrane; the sequence is NVNYGGISGA…RSGAPHLVTT (334 aa). The span at 422–436 shows a compositional bias: polar residues; that stretch reads TSRSGAGTGVSNSNG. Residues 422–462 are disordered; it reads TSRSGAGTGVSNSNGMHRGRDSDRGARKNISATESSVTPGN. 4 N-linked (GlcNAc...) asparagine glycosylation sites follow: Asn-450, Asn-462, Asn-609, and Asn-617. Residues 451 to 462 show a composition bias toward polar residues; that stretch reads ISATESSVTPGN. The RRIL cleavage motif signature appears at 627 to 630; sequence RRIL. N-linked (GlcNAc...) asparagine glycans are attached at residues Asn-643 and Asn-651.

Belongs to the bZIP family. As to quaternary structure, interacts with BZIP28.

The protein resides in the endoplasmic reticulum membrane. Its subcellular location is the golgi apparatus membrane. It localises to the nucleus. Transcriptional activator involved in salt and osmotic stress responses. Functions as a stress sensor and transducer in a signaling pathway that resembles an ER stress response. Following salt stress, BZIP17 is cleaved by SBT6.1 (S1P) and S2P at the C-terminus and the N-terminal bZIP component is translocated to the nucleus, where it activates the expression of salt stress response genes. Functions as a stress sensor and transducer in ER stress signaling pathway. ER stress induces proteolysis of BZIP17 by SBT6.1 (S1P) and S2P, and the N-terminal bZIP component is translocated to the nucleus, where it activates the expression and production of ER chaperones, as well as protein involved in brassinosteroid (BR) signaling, which is required for stress acclimation and growth. The chain is bZIP transcription factor 17 from Arabidopsis thaliana (Mouse-ear cress).